A 408-amino-acid chain; its full sequence is Succinylornithine transaminase (408 aa).

The residue at position 252 (lysine 252) is an N6-(pyridoxal phosphate)lysine.

Belongs to the class-III pyridoxal-phosphate-dependent aminotransferase family. AstC subfamily. It depends on pyridoxal 5'-phosphate as a cofactor.

It carries out the reaction N(2)-succinyl-L-ornithine + 2-oxoglutarate = N-succinyl-L-glutamate 5-semialdehyde + L-glutamate. The protein operates within amino-acid degradation; L-arginine degradation via AST pathway; L-glutamate and succinate from L-arginine: step 3/5. Functionally, catalyzes the transamination of N(2)-succinylornithine and alpha-ketoglutarate into N(2)-succinylglutamate semialdehyde and glutamate. Can also act as an acetylornithine aminotransferase. This Salmonella enteritidis PT4 (strain P125109) protein is Succinylornithine transaminase.